The primary structure comprises 547 residues: Cilia- and flagella- associated protein 210 (547 aa).

Residues 184–254 are a coiled coil; it reads KLNVEKAFKE…EIEMKKKQGK (71 aa). Residues 210 to 237 are disordered; sequence KDHLKQIKEHEEEEERRRKEEEKDAEEI.

In terms of assembly, microtubule inner protein component of sperm flagellar doublet microtubules. As to expression, expressed in trachea multiciliated cells.

It is found in the cytoplasm. The protein localises to the cytoskeleton. It localises to the cilium axoneme. The protein resides in the flagellum axoneme. Microtubule inner protein (MIP) part of the dynein-decorated doublet microtubules (DMTs) in cilia axoneme, which is required for motile cilia beating. The sequence is that of Cilia- and flagella- associated protein 210 (CFAP210) from Bos taurus (Bovine).